Reading from the N-terminus, the 212-residue chain is ATP phosphoribosyltransferase (212 aa).

It belongs to the ATP phosphoribosyltransferase family. Short subfamily. Heteromultimer composed of HisG and HisZ subunits.

Its subcellular location is the cytoplasm. It catalyses the reaction 1-(5-phospho-beta-D-ribosyl)-ATP + diphosphate = 5-phospho-alpha-D-ribose 1-diphosphate + ATP. Its pathway is amino-acid biosynthesis; L-histidine biosynthesis; L-histidine from 5-phospho-alpha-D-ribose 1-diphosphate: step 1/9. Functionally, catalyzes the condensation of ATP and 5-phosphoribose 1-diphosphate to form N'-(5'-phosphoribosyl)-ATP (PR-ATP). Has a crucial role in the pathway because the rate of histidine biosynthesis seems to be controlled primarily by regulation of HisG enzymatic activity. This is ATP phosphoribosyltransferase (hisG) from Halalkalibacterium halodurans (strain ATCC BAA-125 / DSM 18197 / FERM 7344 / JCM 9153 / C-125) (Bacillus halodurans).